The following is a 767-amino-acid chain: Cap-specific mRNA (nucleoside-2'-O-)-methyltransferase 2 (767 aa).

The Adrift-type SAM-dependent 2'-O-MTase domain maps to 109 to 322 (ELCTQAWCKF…VYVVCLRYKG (214 aa)). Residue lysine 117 is part of the active site. 3 residues coordinate S-adenosyl-L-methionine: glycine 148, tryptophan 167, and aspartate 235. The active site involves aspartate 235. Catalysis depends on lysine 275, which acts as the Proton acceptor.

Its subcellular location is the nucleus. It is found in the cytoplasm. It catalyses the reaction a 5'-end (N(7)-methyl 5'-triphosphoguanosine)-(2'-O-methyl-ribonucleoside)-(ribonucleotide) in mRNA + S-adenosyl-L-methionine = a 5'-end (N(7)-methyl 5'-triphosphoguanosine)-(2'-O-methyl-ribonucleoside)-(2'-O-methyl-ribonucleotide) in mRNA + S-adenosyl-L-homocysteine + H(+). Its function is as follows. S-adenosyl-L-methionine-dependent methyltransferase that mediates mRNA cap2 2'-O-ribose methylation to the 5'-cap structure of mRNAs. Methylates the ribose of the second nucleotide of a m(7)GpppG-capped mRNA and small nuclear RNA (snRNA) (cap0) to produce m(7)GpppRmpNm (cap2). Recognizes a guanosine cap on RNA independently of its N(7) methylation status. Display cap2 methylation on both cap0 and cap1. Displays a preference for cap1 RNAs. The polypeptide is Cap-specific mRNA (nucleoside-2'-O-)-methyltransferase 2 (Cmtr2) (Mus musculus (Mouse)).